Consider the following 210-residue polypeptide: Beta-crystallin A4 (210 aa).

Residues 1–25 (MSGMFSGSISETSGMSLQCTKSAGH) are N-terminal arm. Beta/gamma crystallin 'Greek key' domains follow at residues 26-65 (WKIV…KVLS) and 66-112 (GAWV…RPVA). The segment at 113–118 (CANHRD) is connecting peptide. Beta/gamma crystallin 'Greek key' domains are found at residues 119–160 (SRLT…HVHS) and 161–209 (GAWV…RRIQ).

It belongs to the beta/gamma-crystallin family. In terms of assembly, homo/heterodimer, or complexes of higher-order. The structure of beta-crystallin oligomers seems to be stabilized through interactions between the N-terminal arms.

In terms of biological role, crystallins are the dominant structural components of the vertebrate eye lens. The sequence is that of Beta-crystallin A4 (CRYBA4) from Bos taurus (Bovine).